Consider the following 390-residue polypeptide: 8-amino-7-oxononanoate synthase (390 aa).

Arg22 serves as a coordination point for substrate. 109 to 110 (GY) is a binding site for pyridoxal 5'-phosphate. His134 contributes to the substrate binding site. Residues Ser180, His208, and Thr236 each coordinate pyridoxal 5'-phosphate. Lys239 is subject to N6-(pyridoxal phosphate)lysine. Thr353 contacts substrate.

Belongs to the class-II pyridoxal-phosphate-dependent aminotransferase family. BioF subfamily. Homodimer. Requires pyridoxal 5'-phosphate as cofactor.

It carries out the reaction 6-carboxyhexanoyl-[ACP] + L-alanine + H(+) = (8S)-8-amino-7-oxononanoate + holo-[ACP] + CO2. It participates in cofactor biosynthesis; biotin biosynthesis. Functionally, catalyzes the decarboxylative condensation of pimeloyl-[acyl-carrier protein] and L-alanine to produce 8-amino-7-oxononanoate (AON), [acyl-carrier protein], and carbon dioxide. The polypeptide is 8-amino-7-oxononanoate synthase (Azoarcus sp. (strain BH72)).